A 934-amino-acid polypeptide reads, in one-letter code: Bifunctional uridylyltransferase/uridylyl-removing enzyme (934 aa).

The interval 1–379 (MSAHDLKLEE…TFSRRKRKLS (379 aa)) is uridylyltransferase. The uridylyl-removing stretch occupies residues 380-736 (DDGAFISENH…AKPHAFEAVT (357 aa)). Residues 496–613 (VDEHLLRCIA…IDFADTVQTM (118 aa)) enclose the HD domain. 2 ACT domains span residues 737–818 (EITV…DMLA) and 848–931 (VIEV…RSPQ).

This sequence belongs to the GlnD family. Mg(2+) serves as cofactor.

The enzyme catalyses [protein-PII]-L-tyrosine + UTP = [protein-PII]-uridylyl-L-tyrosine + diphosphate. It carries out the reaction [protein-PII]-uridylyl-L-tyrosine + H2O = [protein-PII]-L-tyrosine + UMP + H(+). With respect to regulation, uridylyltransferase (UTase) activity is inhibited by glutamine, while glutamine activates uridylyl-removing (UR) activity. In terms of biological role, modifies, by uridylylation and deuridylylation, the PII regulatory proteins (GlnB and homologs), in response to the nitrogen status of the cell that GlnD senses through the glutamine level. Under low glutamine levels, catalyzes the conversion of the PII proteins and UTP to PII-UMP and PPi, while under higher glutamine levels, GlnD hydrolyzes PII-UMP to PII and UMP (deuridylylation). Thus, controls uridylylation state and activity of the PII proteins, and plays an important role in the regulation of nitrogen assimilation and metabolism. This chain is Bifunctional uridylyltransferase/uridylyl-removing enzyme, found in Brucella ovis (strain ATCC 25840 / 63/290 / NCTC 10512).